Here is a 166-residue protein sequence, read N- to C-terminus: Putative peroxisomal peroxiredoxin (166 aa).

The region spanning Phe-5 to Leu-166 is the Thioredoxin domain. The Cysteine sulfenic acid (-SOH) intermediate role is filled by Cys-56.

Belongs to the peroxiredoxin family. Prx5 subfamily. Homodimer; disulfide-linked, upon oxidation.

The enzyme catalyses a hydroperoxide + [protein]-dithiol = [protein]-disulfide + an alcohol + H2O. Its function is as follows. Thiol-specific peroxidase that catalyzes the reduction of hydrogen peroxide and organic hydroperoxides to water and alcohols, respectively. Plays a role in cell protection against oxidative stress by detoxifying peroxides and as sensor of hydrogen peroxide-mediated signaling events. In Lipomyces kononenkoae (Yeast), this protein is Putative peroxisomal peroxiredoxin.